The sequence spans 127 residues: Glycine cleavage system H protein (127 aa).

The Lipoyl-binding domain maps to 24–105 (TALVGITDFA…YNEGWIVKMK (82 aa)). N6-lipoyllysine is present on Lys65.

Belongs to the GcvH family. As to quaternary structure, the glycine cleavage system is composed of four proteins: P, T, L and H. (R)-lipoate is required as a cofactor.

Functionally, the glycine cleavage system catalyzes the degradation of glycine. The H protein shuttles the methylamine group of glycine from the P protein to the T protein. The polypeptide is Glycine cleavage system H protein (Chlorobaculum tepidum (strain ATCC 49652 / DSM 12025 / NBRC 103806 / TLS) (Chlorobium tepidum)).